A 321-amino-acid chain; its full sequence is Torsin-2A (321 aa).

The first 26 residues, 1–26 (MAAATRSCRPWGSLLGLIWLVSAAAA), serve as a signal peptide directing secretion. 93-100 (GWTGTGKS) provides a ligand contact to ATP. Residue N149 is glycosylated (N-linked (GlcNAc...) asparagine).

This sequence belongs to the ClpA/ClpB family. Torsin subfamily. In terms of assembly, homohexamer. Interacts with TOR1AIP1.

The protein localises to the endoplasmic reticulum lumen. The polypeptide is Torsin-2A (TOR2A) (Bos taurus (Bovine)).